The sequence spans 127 residues: Large ribosomal subunit protein bL20 (127 aa).

The protein belongs to the bacterial ribosomal protein bL20 family.

Functionally, binds directly to 23S ribosomal RNA and is necessary for the in vitro assembly process of the 50S ribosomal subunit. It is not involved in the protein synthesizing functions of that subunit. This Bifidobacterium animalis subsp. lactis (strain AD011) protein is Large ribosomal subunit protein bL20.